Consider the following 315-residue polypeptide: 4-hydroxy-3-methylbut-2-enyl diphosphate reductase (315 aa).

Position 12 (cysteine 12) interacts with [4Fe-4S] cluster. 2 residues coordinate (2E)-4-hydroxy-3-methylbut-2-enyl diphosphate: histidine 41 and histidine 74. Dimethylallyl diphosphate is bound by residues histidine 41 and histidine 74. Residues histidine 41 and histidine 74 each coordinate isopentenyl diphosphate. Residue cysteine 96 coordinates [4Fe-4S] cluster. Residue histidine 124 coordinates (2E)-4-hydroxy-3-methylbut-2-enyl diphosphate. Dimethylallyl diphosphate is bound at residue histidine 124. Histidine 124 contributes to the isopentenyl diphosphate binding site. The Proton donor role is filled by glutamate 126. (2E)-4-hydroxy-3-methylbut-2-enyl diphosphate is bound at residue threonine 168. Cysteine 198 contacts [4Fe-4S] cluster. (2E)-4-hydroxy-3-methylbut-2-enyl diphosphate is bound by residues serine 226, serine 227, asparagine 228, and serine 270. 4 residues coordinate dimethylallyl diphosphate: serine 226, serine 227, asparagine 228, and serine 270. Isopentenyl diphosphate contacts are provided by serine 226, serine 227, asparagine 228, and serine 270.

This sequence belongs to the IspH family. The cofactor is [4Fe-4S] cluster.

It catalyses the reaction isopentenyl diphosphate + 2 oxidized [2Fe-2S]-[ferredoxin] + H2O = (2E)-4-hydroxy-3-methylbut-2-enyl diphosphate + 2 reduced [2Fe-2S]-[ferredoxin] + 2 H(+). The enzyme catalyses dimethylallyl diphosphate + 2 oxidized [2Fe-2S]-[ferredoxin] + H2O = (2E)-4-hydroxy-3-methylbut-2-enyl diphosphate + 2 reduced [2Fe-2S]-[ferredoxin] + 2 H(+). It functions in the pathway isoprenoid biosynthesis; dimethylallyl diphosphate biosynthesis; dimethylallyl diphosphate from (2E)-4-hydroxy-3-methylbutenyl diphosphate: step 1/1. The protein operates within isoprenoid biosynthesis; isopentenyl diphosphate biosynthesis via DXP pathway; isopentenyl diphosphate from 1-deoxy-D-xylulose 5-phosphate: step 6/6. Catalyzes the conversion of 1-hydroxy-2-methyl-2-(E)-butenyl 4-diphosphate (HMBPP) into a mixture of isopentenyl diphosphate (IPP) and dimethylallyl diphosphate (DMAPP). Acts in the terminal step of the DOXP/MEP pathway for isoprenoid precursor biosynthesis. The protein is 4-hydroxy-3-methylbut-2-enyl diphosphate reductase of Pseudomonas syringae pv. syringae (strain B728a).